The sequence spans 366 residues: Melatonin receptor type 1A (366 aa).

The Extracellular portion of the chain corresponds to Met1–Thr45. Asn16 and Asn23 each carry an N-linked (GlcNAc...) asparagine glycan. Residues Leu46–Leu66 traverse the membrane as a helical segment. Over Ser67–Asn79 the chain is Cytoplasmic. The chain crosses the membrane as a helical span at residues Val80–Ala100. Residues Leu101 to Leu118 are Extracellular-facing. Cysteines 116 and 193 form a disulfide. The chain crosses the membrane as a helical span at residues Ser119–Ile139. Topologically, residues Asn140–Thr158 are cytoplasmic. A helical membrane pass occupies residues Asn159–Leu179. Residues Cys180–Tyr203 lie on the Extracellular side of the membrane. The chain crosses the membrane as a helical span at residues Thr204–Leu224. Topologically, residues Arg225–Met256 are cytoplasmic. Residues Phe257–Val277 form a helical membrane-spanning segment. The Extracellular segment spans residues Ala278–Glu290. The chain crosses the membrane as a helical span at residues Trp291–Tyr311. At Gly312–Val366 the chain is on the cytoplasmic side.

Belongs to the G-protein coupled receptor 1 family.

The protein resides in the cell membrane. Functionally, high affinity receptor for melatonin. Likely to mediate the reproductive and circadian actions of melatonin. The activity of this receptor is mediated by pertussis toxin sensitive G proteins that inhibit adenylate cyclase activity. Possibly involved in sleep induction, by melatonin activation of the potassium channel KCNMA1/BK and the dissociation of G-beta and G-gamma subunits, thereby decreasing synaptic transmission. The chain is Melatonin receptor type 1A (MTNR1A) from Ovis aries (Sheep).